Reading from the N-terminus, the 112-residue chain is MPRKLLEERSTGSATKWLREEEKIEKKSRADQLKIKFMQTRDNSDINSIFSEPPSEFSVLCDDDDCDKGSVVSSTLTTSIRKTFSSFRFDENQRKKGTRKRRSSEVDSKEKS.

Residues 91-112 (ENQRKKGTRKRRSSEVDSKEKS) form a disordered region. Over residues 103–112 (SSEVDSKEKS) the composition is skewed to basic and acidic residues.

This is an uncharacterized protein from Caenorhabditis elegans.